The sequence spans 65 residues: Protein MalX (65 aa).

This Klebsiella pneumoniae protein is Protein MalX (malX).